Reading from the N-terminus, the 163-residue chain is 2-C-methyl-D-erythritol 2,4-cyclodiphosphate synthase (163 aa).

Asp12 and His14 together coordinate a divalent metal cation. 4-CDP-2-C-methyl-D-erythritol 2-phosphate-binding positions include 12–14 (DVH) and 38–39 (HS). His46 contacts a divalent metal cation. Residues 60–62 (DIG), 136–139 (TTSE), Phe143, and Arg146 each bind 4-CDP-2-C-methyl-D-erythritol 2-phosphate.

It belongs to the IspF family. As to quaternary structure, homotrimer. It depends on a divalent metal cation as a cofactor.

It catalyses the reaction 4-CDP-2-C-methyl-D-erythritol 2-phosphate = 2-C-methyl-D-erythritol 2,4-cyclic diphosphate + CMP. It functions in the pathway isoprenoid biosynthesis; isopentenyl diphosphate biosynthesis via DXP pathway; isopentenyl diphosphate from 1-deoxy-D-xylulose 5-phosphate: step 4/6. Its function is as follows. Involved in the biosynthesis of isopentenyl diphosphate (IPP) and dimethylallyl diphosphate (DMAPP), two major building blocks of isoprenoid compounds. Catalyzes the conversion of 4-diphosphocytidyl-2-C-methyl-D-erythritol 2-phosphate (CDP-ME2P) to 2-C-methyl-D-erythritol 2,4-cyclodiphosphate (ME-CPP) with a corresponding release of cytidine 5-monophosphate (CMP). In Xanthomonas oryzae pv. oryzae (strain MAFF 311018), this protein is 2-C-methyl-D-erythritol 2,4-cyclodiphosphate synthase.